Reading from the N-terminus, the 197-residue chain is Adenylylsulfatase HINT3 (197 aa).

The tract at residues 14–43 (NPPGPNPTRDPTLRVSDCSSGSSGDGKVES) is disordered. An HIT domain is found at 51 to 158 (VFCKIIRGES…IPRKERDCLW (108 aa)). The Histidine triad motif motif lies at 143–147 (HTHIH). Residue His145 is the Tele-AMP-histidine intermediate of the active site. A substrate-binding site is contributed by His147.

The protein resides in the peroxisome. It catalyses the reaction adenosine 5'-phosphosulfate + H2O = sulfate + AMP + 2 H(+). Functionally, possesses adenylylsulfatase activity in vitro. In Arabidopsis thaliana (Mouse-ear cress), this protein is Adenylylsulfatase HINT3.